Here is a 536-residue protein sequence, read N- to C-terminus: Bifunctional purine biosynthesis protein PurH (536 aa).

The MGS-like domain occupies 8–158; sequence IPAPDEVRIQ…KNHAYVTIVT (151 aa).

This sequence belongs to the PurH family.

The catalysed reaction is (6R)-10-formyltetrahydrofolate + 5-amino-1-(5-phospho-beta-D-ribosyl)imidazole-4-carboxamide = 5-formamido-1-(5-phospho-D-ribosyl)imidazole-4-carboxamide + (6S)-5,6,7,8-tetrahydrofolate. It catalyses the reaction IMP + H2O = 5-formamido-1-(5-phospho-D-ribosyl)imidazole-4-carboxamide. It functions in the pathway purine metabolism; IMP biosynthesis via de novo pathway; 5-formamido-1-(5-phospho-D-ribosyl)imidazole-4-carboxamide from 5-amino-1-(5-phospho-D-ribosyl)imidazole-4-carboxamide (10-formyl THF route): step 1/1. The protein operates within purine metabolism; IMP biosynthesis via de novo pathway; IMP from 5-formamido-1-(5-phospho-D-ribosyl)imidazole-4-carboxamide: step 1/1. The polypeptide is Bifunctional purine biosynthesis protein PurH (Sinorhizobium fredii (strain NBRC 101917 / NGR234)).